A 525-amino-acid polypeptide reads, in one-letter code: Peptide chain release factor 3 (525 aa).

Positions 9–276 (AKRRTFAIIS…GFTRYAPAPQ (268 aa)) constitute a tr-type G domain. Residues 18–25 (SHPDAGKT), 86–90 (DTPGH), and 140–143 (NKFD) each bind GTP.

It belongs to the TRAFAC class translation factor GTPase superfamily. Classic translation factor GTPase family. PrfC subfamily.

Its subcellular location is the cytoplasm. In terms of biological role, increases the formation of ribosomal termination complexes and stimulates activities of RF-1 and RF-2. It binds guanine nucleotides and has strong preference for UGA stop codons. It may interact directly with the ribosome. The stimulation of RF-1 and RF-2 is significantly reduced by GTP and GDP, but not by GMP. The protein is Peptide chain release factor 3 of Francisella tularensis subsp. novicida (strain U112).